The primary structure comprises 482 residues: Glutamate--tRNA ligase (482 aa).

Positions 9–19 (PSPTGPIHVGN) match the 'HIGH' region motif. 4 residues coordinate Zn(2+): Cys-106, Cys-108, Cys-133, and Asp-135. A 'KMSKS' region motif is present at residues 250–254 (KLSKR). Lys-253 contributes to the ATP binding site.

This sequence belongs to the class-I aminoacyl-tRNA synthetase family. Glutamate--tRNA ligase type 1 subfamily. As to quaternary structure, monomer. Zn(2+) serves as cofactor.

The protein localises to the cytoplasm. It carries out the reaction tRNA(Glu) + L-glutamate + ATP = L-glutamyl-tRNA(Glu) + AMP + diphosphate. In terms of biological role, catalyzes the attachment of glutamate to tRNA(Glu) in a two-step reaction: glutamate is first activated by ATP to form Glu-AMP and then transferred to the acceptor end of tRNA(Glu). This is Glutamate--tRNA ligase from Symbiobacterium thermophilum (strain DSM 24528 / JCM 14929 / IAM 14863 / T).